We begin with the raw amino-acid sequence, 405 residues long: Phosphopentomutase (405 aa).

Positions 10, 303, 308, 344, 345, and 356 each coordinate Mn(2+).

Belongs to the phosphopentomutase family. The cofactor is Mn(2+).

The protein resides in the cytoplasm. It catalyses the reaction 2-deoxy-alpha-D-ribose 1-phosphate = 2-deoxy-D-ribose 5-phosphate. It carries out the reaction alpha-D-ribose 1-phosphate = D-ribose 5-phosphate. The protein operates within carbohydrate degradation; 2-deoxy-D-ribose 1-phosphate degradation; D-glyceraldehyde 3-phosphate and acetaldehyde from 2-deoxy-alpha-D-ribose 1-phosphate: step 1/2. In terms of biological role, isomerase that catalyzes the conversion of deoxy-ribose 1-phosphate (dRib-1-P) and ribose 1-phosphate (Rib-1-P) to deoxy-ribose 5-phosphate (dRib-5-P) and ribose 5-phosphate (Rib-5-P), respectively. In Shewanella loihica (strain ATCC BAA-1088 / PV-4), this protein is Phosphopentomutase.